Here is a 447-residue protein sequence, read N- to C-terminus: Signal recognition particle 54 kDa protein (447 aa).

GTP-binding positions include 103-110, 185-189, and 245-248; these read GVQGSGKT, DTAGR, and TKMD.

Belongs to the GTP-binding SRP family. SRP54 subfamily. Part of the signal recognition particle protein translocation system, which is composed of SRP and FtsY. Archaeal SRP consists of a 7S RNA molecule of 300 nucleotides and two protein subunits: SRP54 and SRP19.

The protein resides in the cytoplasm. It catalyses the reaction GTP + H2O = GDP + phosphate + H(+). Involved in targeting and insertion of nascent membrane proteins into the cytoplasmic membrane. Binds to the hydrophobic signal sequence of the ribosome-nascent chain (RNC) as it emerges from the ribosomes. The SRP-RNC complex is then targeted to the cytoplasmic membrane where it interacts with the SRP receptor FtsY. The protein is Signal recognition particle 54 kDa protein of Saccharolobus islandicus (strain L.S.2.15 / Lassen #1) (Sulfolobus islandicus).